Reading from the N-terminus, the 604-residue chain is UvrABC system protein C (604 aa).

Residues Asp15 to Ile92 enclose the GIY-YIG domain. The UVR domain occupies Glu197–Thr232.

Belongs to the UvrC family. In terms of assembly, interacts with UvrB in an incision complex.

Its subcellular location is the cytoplasm. Functionally, the UvrABC repair system catalyzes the recognition and processing of DNA lesions. UvrC both incises the 5' and 3' sides of the lesion. The N-terminal half is responsible for the 3' incision and the C-terminal half is responsible for the 5' incision. This Lactiplantibacillus plantarum (strain ATCC BAA-793 / NCIMB 8826 / WCFS1) (Lactobacillus plantarum) protein is UvrABC system protein C.